A 131-amino-acid polypeptide reads, in one-letter code: Transcriptional activatory protein CaiF (131 aa).

Its function is as follows. Potential transcriptional activator of carnitine metabolism. The chain is Transcriptional activatory protein CaiF (caiF) from Escherichia coli (strain K12).